The following is a 253-amino-acid chain: Triosephosphate isomerase (253 aa).

Position 9-11 (9-11) interacts with substrate; the sequence is NWK. Histidine 95 functions as the Electrophile in the catalytic mechanism. Glutamate 167 serves as the catalytic Proton acceptor. Residues glycine 173, serine 213, and 234–235 each bind substrate; that span reads GG. Phosphoserine is present on serine 213.

This sequence belongs to the triosephosphate isomerase family. In terms of assembly, homodimer.

It localises to the cytoplasm. The catalysed reaction is D-glyceraldehyde 3-phosphate = dihydroxyacetone phosphate. It functions in the pathway carbohydrate biosynthesis; gluconeogenesis. The protein operates within carbohydrate degradation; glycolysis; D-glyceraldehyde 3-phosphate from glycerone phosphate: step 1/1. Its function is as follows. Involved in the gluconeogenesis. Catalyzes stereospecifically the conversion of dihydroxyacetone phosphate (DHAP) to D-glyceraldehyde-3-phosphate (G3P). The chain is Triosephosphate isomerase from Geobacillus thermodenitrificans (strain NG80-2).